A 2067-amino-acid chain; its full sequence is Dedicator of cytokinesis protein 11 (2067 aa).

In terms of domain architecture, PH spans 162 to 269 (GVMKQGWLQK…WVNTIKQALL (108 aa)). The interval 274 to 302 (DRRNGSETSEGSLDDDSSSQGKPESITES) is disordered. Residues 291 to 302 (SSQGKPESITES) show a composition bias toward polar residues. Positions 643–820 (NNHLYIYPQQ…PLFKVRAYVA (178 aa)) constitute a C2 DOCK-type domain. Positions 1224 to 1267 (SSTIVDKEPSGSVTQNGLSRRGESRGSMYGDPGTPDINELHRRG) are disordered. One can recognise a DOCKER domain in the interval 1614-2040 (RSYASTPELR…LSEIIHEQIF (427 aa)).

The protein belongs to the DOCK family.

Its function is as follows. Guanine nucleotide-exchange factor (GEF) that activates CDC42 by exchanging bound GDP for free GTP. The polypeptide is Dedicator of cytokinesis protein 11 (Danio rerio (Zebrafish)).